Here is a 103-residue protein sequence, read N- to C-terminus: UPF0145 protein BC_5181 (103 aa).

This sequence belongs to the UPF0145 family.

The protein is UPF0145 protein BC_5181 of Bacillus cereus (strain ATCC 14579 / DSM 31 / CCUG 7414 / JCM 2152 / NBRC 15305 / NCIMB 9373 / NCTC 2599 / NRRL B-3711).